A 210-amino-acid chain; its full sequence is ATP-dependent Clp protease proteolytic subunit (210 aa).

The Nucleophile role is filled by serine 113. Histidine 138 is a catalytic residue.

The protein belongs to the peptidase S14 family. In terms of assembly, fourteen ClpP subunits assemble into 2 heptameric rings which stack back to back to give a disk-like structure with a central cavity, resembling the structure of eukaryotic proteasomes.

It localises to the cytoplasm. It carries out the reaction Hydrolysis of proteins to small peptides in the presence of ATP and magnesium. alpha-casein is the usual test substrate. In the absence of ATP, only oligopeptides shorter than five residues are hydrolyzed (such as succinyl-Leu-Tyr-|-NHMec, and Leu-Tyr-Leu-|-Tyr-Trp, in which cleavage of the -Tyr-|-Leu- and -Tyr-|-Trp bonds also occurs).. In terms of biological role, cleaves peptides in various proteins in a process that requires ATP hydrolysis. Has a chymotrypsin-like activity. Plays a major role in the degradation of misfolded proteins. The polypeptide is ATP-dependent Clp protease proteolytic subunit (Marinomonas sp. (strain MWYL1)).